Consider the following 358-residue polypeptide: MKPFPRAEISSSALQNNLAVLRQQASASQVMAVVKANGYGHGLLNVANCLVNADGFGLARLEEALELRAGGVKARLLLLEGFFRSTDLPLLVAHDIDTVVHHESQIEMLEQVKLTKPVTVWLKVDSGMHRLGVTPEQFATVYARLMACPNIAKPIHLMTHFACADEPDNHYTDVQMAAFNELTAGLPGFRTLANSAGALYWPKSQGDWIRPGIALYGVSPVAGDCGTNHGLIPAMNLVSRLIAVRDHKANQPVGYGCYWTAKQDTRLGVVAIGYGDGYPRNAPEGTPVWVNGRRVPIVGRVSMDMLTVDLGQDATDKVGDDVLLWGQDLPVEEVAERIGTIAYELVTKLTPRVAVCLA.

Lys35 (proton acceptor; specific for D-alanine) is an active-site residue. The residue at position 35 (Lys35) is an N6-(pyridoxal phosphate)lysine. Arg130 is a binding site for substrate. Tyr255 serves as the catalytic Proton acceptor; specific for L-alanine. Substrate is bound at residue Met303.

It belongs to the alanine racemase family. Requires pyridoxal 5'-phosphate as cofactor.

The catalysed reaction is L-alanine = D-alanine. It functions in the pathway amino-acid biosynthesis; D-alanine biosynthesis; D-alanine from L-alanine: step 1/1. Functionally, catalyzes the interconversion of L-alanine and D-alanine. May also act on other amino acids. This Shewanella putrefaciens (strain CN-32 / ATCC BAA-453) protein is Alanine racemase (alr).